Reading from the N-terminus, the 235-residue chain is 7-carboxy-7-deazaguanine synthase (235 aa).

Residues 25–27 (IQG) and Arg40 contribute to the substrate site. The Radical SAM core domain occupies 31-235 (FTGTYSVFVR…PRLHLLVQLP (205 aa)). Positions 44, 48, and 51 each coordinate [4Fe-4S] cluster. Mg(2+) is bound at residue Thr53. Position 85 (Thr85) interacts with substrate. S-adenosyl-L-methionine is bound by residues Gly87 and 135-137 (SPK). Pro235 is a binding site for substrate.

The protein belongs to the radical SAM superfamily. 7-carboxy-7-deazaguanine synthase family. In terms of assembly, homodimer. [4Fe-4S] cluster serves as cofactor. The cofactor is S-adenosyl-L-methionine. It depends on Mg(2+) as a cofactor.

The enzyme catalyses 6-carboxy-5,6,7,8-tetrahydropterin + H(+) = 7-carboxy-7-deazaguanine + NH4(+). Its pathway is purine metabolism; 7-cyano-7-deazaguanine biosynthesis. Functionally, catalyzes the complex heterocyclic radical-mediated conversion of 6-carboxy-5,6,7,8-tetrahydropterin (CPH4) to 7-carboxy-7-deazaguanine (CDG), a step common to the biosynthetic pathways of all 7-deazapurine-containing compounds. This Hyperthermus butylicus (strain DSM 5456 / JCM 9403 / PLM1-5) protein is 7-carboxy-7-deazaguanine synthase.